Here is a 186-residue protein sequence, read N- to C-terminus: dCTP deaminase (186 aa).

107–112 (KSTYAR) contacts dCTP. Glu133 functions as the Proton donor/acceptor in the catalytic mechanism. Residues Gln152, Tyr166, and Gln176 each coordinate dCTP.

It belongs to the dCTP deaminase family. In terms of assembly, homotrimer.

It carries out the reaction dCTP + H2O + H(+) = dUTP + NH4(+). The protein operates within pyrimidine metabolism; dUMP biosynthesis; dUMP from dCTP (dUTP route): step 1/2. Catalyzes the deamination of dCTP to dUTP. The protein is dCTP deaminase of Campylobacter jejuni subsp. jejuni serotype O:2 (strain ATCC 700819 / NCTC 11168).